Here is a 300-residue protein sequence, read N- to C-terminus: ETS homologous factor (300 aa).

Residues 29–115 (PTCNVSSGFF…SNLQHLKWNG (87 aa)) enclose the PNT domain. The segment at 181–203 (VAESPDMKKEQDHPVKSHTKKHN) is disordered. Over residues 185–195 (PDMKKEQDHPV) the composition is skewed to basic and acidic residues. The ETS DNA-binding region spans 207–289 (THLWEFIRDI…DGRRLVYKFG (83 aa)).

It belongs to the ETS family. Highly expressed in kidney and lung, weakly in skeletal muscle, heart, and liver, and not detected in brain, spleen or testis.

It localises to the nucleus. In terms of biological role, transcriptional activator that may play a role in regulating epithelial cell differentiation and proliferation. May act as a repressor for a specific subset of ETS/AP-1-responsive genes, and as a modulator of the nuclear response to mitogen-activated protein kinase signaling cascades. Binds to DNA sequences containing the consensus nucleotide core sequence GGAA. Involved in regulation of TNFRSF10B/DR5 expression through Ets-binding sequences on the TNFRSF10B/DR5 promoter. The protein is ETS homologous factor of Mus musculus (Mouse).